A 538-amino-acid polypeptide reads, in one-letter code: ATP-dependent rRNA helicase RRP3 (538 aa).

Residues 1–11 are compositionally biased toward basic residues; it reads MSSAKRVKLSH. Positions 1–112 are disordered; it reads MSSAKRVKLS…SKEETPTKSF (112 aa). The segment covering 34-47 has biased composition (low complexity); sequence KKITQAPKAAAPIK. Positions 53–85 are enriched in acidic residues; that stretch reads AEEDDDDDDKDDKDEEDEEQNDDSSDEASENDD. Residues 92 to 112 show a composition bias toward basic and acidic residues; sequence EATKEGQTELPSKEETPTKSF. Positions 110 to 138 match the Q motif motif; the sequence is KSFRDLGIVEPLCEACEALKFKKPTPIQE. One can recognise a Helicase ATP-binding domain in the interval 141-312; that stretch reads IPLALQGRDV…RASLRDPLKV (172 aa). Residue 154–161 participates in ATP binding; the sequence is AETGSGKT. Positions 260–263 match the DEAD box motif; sequence DEAD. The Helicase C-terminal domain occupies 336–486; sequence HKDVYLIYLA…LFQPDKEEVM (151 aa). Basic and acidic residues predominate over residues 498 to 512; it reads HAREEMKALHEDRGK. The interval 498–538 is disordered; it reads HAREEMKALHEDRGKKGAVLKGRKRGSATKRRHDDMDAEEG. The span at 513-528 shows a compositional bias: basic residues; that stretch reads KGAVLKGRKRGSATKR.

The protein belongs to the DEAD box helicase family. DDX47/RRP3 subfamily. In terms of assembly, interacts with the SSU processome.

It is found in the nucleus. The catalysed reaction is ATP + H2O = ADP + phosphate + H(+). In terms of biological role, ATP-dependent rRNA helicase required for pre-ribosomal RNA processing. Involved in the maturation of the 35S-pre-rRNA and to its cleavage to mature 18S rRNA. This is ATP-dependent rRNA helicase RRP3 from Pyricularia oryzae (strain 70-15 / ATCC MYA-4617 / FGSC 8958) (Rice blast fungus).